The sequence spans 124 residues: Fluoride-specific ion channel FluC (124 aa).

Transmembrane regions (helical) follow at residues 36-56 (VGTM…VVVL), 63-83 (YAPF…AFSL), and 99-119 (AYVG…MAAV). Positions 73 and 76 each coordinate Na(+).

This sequence belongs to the fluoride channel Fluc/FEX (TC 1.A.43) family.

It is found in the cell inner membrane. The catalysed reaction is fluoride(in) = fluoride(out). With respect to regulation, na(+) is not transported, but it plays an essential structural role and its presence is essential for fluoride channel function. Its function is as follows. Fluoride-specific ion channel. Important for reducing fluoride concentration in the cell, thus reducing its toxicity. The polypeptide is Fluoride-specific ion channel FluC (Cereibacter sphaeroides (strain ATCC 17029 / ATH 2.4.9) (Rhodobacter sphaeroides)).